We begin with the raw amino-acid sequence, 352 residues long: Small ribosomal subunit biogenesis GTPase RsgA (352 aa).

Residues Met-1–Arg-21 show a composition bias toward basic residues. The segment at Met-1–Ala-38 is disordered. One can recognise a CP-type G domain in the interval Phe-116 to Phe-278. GTP-binding positions include Asn-164 to Asp-167 and Gly-218 to Ser-226. Zn(2+)-binding residues include Cys-302, Cys-307, His-309, and Cys-315.

The protein belongs to the TRAFAC class YlqF/YawG GTPase family. RsgA subfamily. Monomer. Associates with 30S ribosomal subunit, binds 16S rRNA. Zn(2+) is required as a cofactor.

Its subcellular location is the cytoplasm. Functionally, one of several proteins that assist in the late maturation steps of the functional core of the 30S ribosomal subunit. Helps release RbfA from mature subunits. May play a role in the assembly of ribosomal proteins into the subunit. Circularly permuted GTPase that catalyzes slow GTP hydrolysis, GTPase activity is stimulated by the 30S ribosomal subunit. In Hamiltonella defensa subsp. Acyrthosiphon pisum (strain 5AT), this protein is Small ribosomal subunit biogenesis GTPase RsgA.